Consider the following 536-residue polypeptide: Cytochrome P450 monooxygenase pbrC (536 aa).

The helical transmembrane segment at 20 to 39 (VMLPALVGFAFLIYQAFFAI) threads the bilayer. Cys479 serves as a coordination point for heme.

It belongs to the cytochrome P450 family. It depends on heme as a cofactor.

It localises to the membrane. It participates in secondary metabolite biosynthesis; terpenoid biosynthesis. Its function is as follows. Cytochrome P450 monooxygenase; part of the gene cluster that mediates the biosynthesis of the sesquiterpenoid aspterric acid (AA), an inhibitor of dihydroxy-acid dehydratase (DHAD) effective as an herbicide. PbrC catalyzes the third and last step within the pathway and converts the alpha-epoxy carboxylate intermediate produced by the cytochrome P450 monooxygenase pbrB from (-)daucane into the tricyclic aspterric acid. In Penicillium brasilianum, this protein is Cytochrome P450 monooxygenase pbrC.